The chain runs to 329 residues: uncharacterized protein (329 aa).

Residues Ser284–Ser303 are disordered.

This is an uncharacterized protein from Methanocaldococcus jannaschii (strain ATCC 43067 / DSM 2661 / JAL-1 / JCM 10045 / NBRC 100440) (Methanococcus jannaschii).